Reading from the N-terminus, the 93-residue chain is Small ribosomal subunit protein bS18c (93 aa).

This sequence belongs to the bacterial ribosomal protein bS18 family. As to quaternary structure, part of the 30S ribosomal subunit.

The protein localises to the plastid. It localises to the chloroplast. This Pinus koraiensis (Korean pine) protein is Small ribosomal subunit protein bS18c.